A 135-amino-acid polypeptide reads, in one-letter code: Evasin P1134 (135 aa).

The first 31 residues, 1-31, serve as a signal peptide directing secretion; that stretch reads MEVKTFAFLQIAVFIALGIQIFAAVTAAADA. 3 disulfides stabilise this stretch: Cys41-Cys63, Cys45-Cys65, and Cys56-Cys76. The N-linked (GlcNAc...) asparagine glycan is linked to Asn44. A disordered region spans residues 88–112; the sequence is ETPSNSDLEAATPRPRKTLYPVRNP.

Its subcellular location is the secreted. In terms of biological role, salivary chemokine-binding protein which binds to host chemokine CXCL1. In Ixodes ricinus (Common tick), this protein is Evasin P1134.